The chain runs to 846 residues: Interleukin cytokine receptor-related protein 1 (846 aa).

The first 25 residues, 1-25 (MFLHSPALLIWLFLFCLAGPQAVRT), serve as a signal peptide directing secretion. Over 26–418 (EPYNSTSSSS…KEDTTWTWHT (393 aa)) the chain is Extracellular. 6 N-linked (GlcNAc...) asparagine glycosylation sites follow: N29, N79, N186, N214, N339, and N395. The segment at 388–409 (EKPPATSNQTEESDGKAEKDKK) is disordered. Over residues 400 to 409 (SDGKAEKDKK) the composition is skewed to basic and acidic residues. The helical transmembrane segment at 419–439 (YAITGGAIIAILFILSVCAGL) threads the bilayer. Topologically, residues 440–846 (KCYKKFNNKK…AFHDEVIGIH (407 aa)) are cytoplasmic. The SEFIR domain maps to 476-618 (SISVLIVYSH…IPNSLMTMTT (143 aa)). The interval 737–771 (GPIHVEPTEPEVLEPAEEPMEEAEEDEEDEDDVDS) is disordered. A compositionally biased stretch (acidic residues) spans 744-771 (TEPEVLEPAEEPMEEAEEDEEDEDDVDS).

In terms of assembly, component of a heterodimeric receptor complex composed of ilcr-1 and ilcr-2. The receptor complex interacts with actl-1 and ilc-17.1 with the interaction being mediated by ilcr-2. As to expression, expressed in most neurons.

It localises to the cell membrane. Its function is as follows. Forms a receptor complex together with receptor ilcr-2, which upon activation acts as a modulator of neuronal activity. Binding of the ligand ilc-17.1 to the ilcr-1/2 receptor complex triggers a signaling cascade that activates the downstream signaling components actl-1, pik-1 and nfki-1, and results in increased neuronal activity in RMG interneurons in response to input from oxygen-sensing neurons. This leads to increased animal movement and promotes aggregation behavior. This is Interleukin cytokine receptor-related protein 1 from Caenorhabditis elegans.